We begin with the raw amino-acid sequence, 875 residues long: Probable ubiquitin carboxyl-terminal hydrolase 7 (875 aa).

The UBP-type zinc finger occupies 54–167; the sequence is KECSHLKKGV…RDVQQFICSN (114 aa). Cys-56, His-58, Cys-83, Cys-86, Cys-101, Cys-104, Cys-109, His-116, His-120, His-127, Cys-140, and Cys-143 together coordinate Zn(2+). The USP domain occupies 208–875; that stretch reads PGLKNLGATC…EAYMLFYERV (668 aa). The active-site Nucleophile is Cys-217. Phosphoserine occurs at positions 333 and 337. The interval 396–486 is disordered; it reads YSKELSQSSD…ASPKKEVLKS (91 aa). Over residues 401 to 438 the composition is skewed to low complexity; it reads SQSSDSSQHQHDSFLPANSSPLAASSTKSLPSSELLDS. Positions 473–484 are enriched in basic and acidic residues; it reads NHEEASPKKEVL. 2 positions are modified to phosphoserine: Ser-486 and Ser-493. A compositionally biased stretch (basic residues) spans 575 to 586; that stretch reads RSRFSRSPKKSS. The interval 575–628 is disordered; it reads RSRFSRSPKKSSVKIVVDNANDDTDQAPTTNSSSLNENLLGGHASENDKSLKQS. Residues 600–611 show a composition bias toward polar residues; the sequence is QAPTTNSSSLNE. Ser-645 is modified (phosphoserine). Residue His-812 is the Proton acceptor of the active site.

It belongs to the peptidase C19 family.

It carries out the reaction Thiol-dependent hydrolysis of ester, thioester, amide, peptide and isopeptide bonds formed by the C-terminal Gly of ubiquitin (a 76-residue protein attached to proteins as an intracellular targeting signal).. The sequence is that of Probable ubiquitin carboxyl-terminal hydrolase 7 (ubp7) from Schizosaccharomyces pombe (strain 972 / ATCC 24843) (Fission yeast).